Consider the following 240-residue polypeptide: Ornithine decarboxylase antizyme (240 aa).

2 disordered regions span residues 18–45 (RSEP…SSAG) and 69–95 (DHDR…SSEF). The segment covering 21–33 (PISSSNRATKRTI) has biased composition (polar residues). Positions 34 to 43 (SSSSSSSSSS) are enriched in low complexity. Basic and acidic residues predominate over residues 69-84 (DHDRASPLKEYNRKTS). The span at 85–95 (IDSTTTASSEF) shows a compositional bias: polar residues.

Belongs to the ODC antizyme family. Interacts with ODC1 and thereby sterically blocks ODC homodimerization. As to expression, preferentially expressed in adult female midguts.

Functionally, ornithine decarboxylase (ODC) antizyme protein that negatively regulates ODC activity and intracellular polyamine biosynthesis and uptake in response to increased intracellular polyamine levels. Binds to ODC monomers, inhibiting the assembly of the functional ODC homodimer, and targets the monomers for ubiquitin-independent proteolytic destruction by the 26S proteasome. This chain is Ornithine decarboxylase antizyme (Oda), found in Aedes aegypti (Yellowfever mosquito).